Reading from the N-terminus, the 446-residue chain is Tetratricopeptide repeat protein 23 (446 aa).

TPR repeat units lie at residues 45–78 (LRLS…TRIC), 137–170 (VELF…SKEM), 186–219 (ARIK…TEIS), 310–347 (TAKF…KVAV), and 356–389 (AETY…QTLL). The tract at residues 410 to 446 (APEVPARPRPSPGAKAAFCAGGRPYSVPGRTRPSAAD) is disordered.

Associated with the EvC complex composed of EFCAB7, IQCE, EVC2 and EVC.

It is found in the cell projection. Its subcellular location is the cilium. In terms of biological role, participates positively in the ciliary Hedgehog (Hh) signaling. This chain is Tetratricopeptide repeat protein 23 (TTC23), found in Bos taurus (Bovine).